Consider the following 713-residue polypeptide: Endopolyphosphatase (713 aa).

The Cytoplasmic segment spans residues 1 to 19 (MSVLIDEKSHRSSGSTRSR). A helical; Signal-anchor for type II membrane protein membrane pass occupies residues 20–40 (IVVTVVGVLLMVSGLAVMLGH). The Vacuolar segment spans residues 41 to 713 (QSGSANEALG…SSEYENMGMG (673 aa)). The segment covering 399-418 (SDDDDNSDSDSDDDDEDTSL) has biased composition (acidic residues). The segment at 399–430 (SDDDDNSDSDSDDDDEDTSLEESYSNFNSPIL) is disordered. N-linked (GlcNAc...) asparagine glycosylation is found at asparagine 507 and asparagine 645. Residues 640-659 (VKEKKNKSNKKSKKKKKNKD) show a composition bias toward basic residues. The disordered stretch occupies residues 640 to 684 (VKEKKNKSNKKSKKKKKNKDKRLLENSEPLKQDGSKDSRLEQDRV). A compositionally biased stretch (basic and acidic residues) spans 660 to 683 (KRLLENSEPLKQDGSKDSRLEQDR).

The protein belongs to the endopolyphosphatase PPN1 family. A divalent metal cation is required as a cofactor. Processing by proteases in the vacuole may be required for activation.

It localises to the vacuole membrane. The catalysed reaction is [phosphate](n+1) + n H2O = (n+1) phosphate + n H(+). Functionally, catalyzes the hydrolysis of inorganic polyphosphate (polyP) chains of many hundreds of phosphate residues into shorter lengths. This chain is Endopolyphosphatase (PPN1), found in Debaryomyces hansenii (strain ATCC 36239 / CBS 767 / BCRC 21394 / JCM 1990 / NBRC 0083 / IGC 2968) (Yeast).